The sequence spans 278 residues: ABC transporter I family member 11, chloroplastic (278 aa).

A chloroplast-targeting transit peptide spans 1-49 (MAVSTFSSPTPVFGIAEPPASFSSTAIGWKQPLRFRRTKKPRVISCDYS). The region spanning 51-278 (IEVRDVCYRP…GVLVAERPPL (228 aa)) is the ABC transporter domain. 85 to 92 (GKSGSGKT) is an ATP binding site.

It belongs to the ABC transporter superfamily. ABCI family.

It localises to the plastid. The protein localises to the chloroplast. In Arabidopsis thaliana (Mouse-ear cress), this protein is ABC transporter I family member 11, chloroplastic (ABCI11).